The sequence spans 449 residues: Guanine nucleotide-binding protein alpha-2 subunit (449 aa).

The interval 1-91 (MGLCASSEKN…TATANTSGSQ (91 aa)) is disordered. Residue Gly2 is the site of N-myristoyl glycine attachment. Cys4 is lipidated: S-palmitoyl cysteine. Polar residues-rich tracts occupy residues 7 to 23 (SEKN…SAGS) and 38 to 48 (QKTVRTVNTAN). Positions 49–59 (QQEKQQQRQQQ) are enriched in low complexity. The span at 72-91 (NGSINNAISPTATANTSGSQ) shows a compositional bias: polar residues. The region spanning 122-448 (KELKVLLLGA…ENTLKDSGVL (327 aa)) is the G-alpha domain. The G1 motif stretch occupies residues 125–138 (KVLLLGAGESGKST). GTP is bound by residues Glu133, Ser134, Gly135, Lys136, Ser137, Thr138, Asp245, Leu270, Thr276, Gly299, Asn365, Lys366, Asp368, and Ala420. A Mg(2+)-binding site is contributed by Ser137. The tract at residues 268–276 (DILRSRQMT) is G2 motif. Thr276 contributes to the Mg(2+) binding site. The interval 292-301 (MHIYDVGGQR) is G3 motif. Residues 361-368 (VLFLNKID) are G4 motif. The tract at residues 418–423 (TQATDT) is G5 motif.

It belongs to the G-alpha family. G(q) subfamily. In terms of assembly, g proteins are composed of 3 units; alpha, beta and gamma. The alpha chain contains the guanine nucleotide binding site. GPA2 interacts with the kelch repeat beta-mimic proteins GPB1 and GPB2 and with the gamma subunit GPG1. Interacts with the G protein coupled receptor GPR1. Also interacts with regulators of G protein signaling (RGS) protein RGS2. The cofactor is Mg(2+). Post-translationally, myristoylation at Gly-2 and palmitoylation at Cys-4 are required for membrane localization and function of the protein.

The protein localises to the cell membrane. Its activity is regulated as follows. Alternates between an inactive form bound to GDP and an active form bound to GTP. Activated by the G protein coupled receptor (GPCR) GPR1, which serves as a guanine nucleotide-exchange factor (GEF), and inactivated by RGS2, acting as a GTPase-activating protein (GAP) for GPA2. Functionally, alpha subunit of the heterotrimeric guanine nucleotide-binding protein (G protein) involved in glucose-induced cAMP signaling. Binds to its cognate transmembrane receptor GPR1, which senses extracellular carbon sources, and activates cAMP-PKA signaling and governs diploid pseudohyphal differentiation and haploid invasive growth. The G protein beta-mimic proteins GPB1 and GPB2 inhibit GPA2-GPR1 coupling, probably to reduce signaling in the absence of glucose. This Saccharomyces cerevisiae (strain ATCC 204508 / S288c) (Baker's yeast) protein is Guanine nucleotide-binding protein alpha-2 subunit (GPA2).